A 347-amino-acid chain; its full sequence is Protein-glutamate methylesterase/protein-glutamine glutaminase (347 aa).

Residues 3-119 (EALVVDDSHF…STELSGHSEE (117 aa)) form the Response regulatory domain. 4-aspartylphosphate is present on Asp53. Residues 132–154 (PTAGHDVEMEPASPPDATTSEYA) are disordered. In terms of domain architecture, CheB-type methylesterase spans 152 to 346 (EYADNPTLLI…EAIADSIRRT (195 aa)). Residues Ser164, His191, and Asp288 contribute to the active site.

The protein belongs to the CheB family. In terms of processing, phosphorylated by CheA. Phosphorylation of the N-terminal regulatory domain activates the methylesterase activity.

It is found in the cytoplasm. It catalyses the reaction [protein]-L-glutamate 5-O-methyl ester + H2O = L-glutamyl-[protein] + methanol + H(+). The catalysed reaction is L-glutaminyl-[protein] + H2O = L-glutamyl-[protein] + NH4(+). Involved in the modulation of the chemotaxis system; catalyzes the demethylation of specific methylglutamate residues introduced into the Htr transducer proteins (methyl-accepting chemotaxis proteins) by CheR. Also required for Htr deamidations, at least at a specific glutamine-glutamate pair in HTR-II and a specific aspartate-glutamine pair in Htr4. The sequence is that of Protein-glutamate methylesterase/protein-glutamine glutaminase from Halobacterium salinarum (strain ATCC 29341 / DSM 671 / R1).